The primary structure comprises 125 residues: MIQKAVSNSSTSFGSITMTDNALTSDVPVNSTVVGQSQGFYAGAAQRELGFLMAMNFAFKTGKYNGSTITILGRNTVFSKVREMTVVGGSGIFRLARGYVEARTKWFDPKTGDATVEYNCYVLHY.

Residues Asn8, Asn30, and Asn65 are each glycosylated (N-linked (GlcNAc...) asparagine).

Belongs to the plant dirigent protein family. In terms of assembly, homodimer.

It is found in the secreted. It localises to the extracellular space. The protein localises to the apoplast. Its function is as follows. Dirigent proteins impart stereoselectivity on the phenoxy radical-coupling reaction, yielding optically active lignans from two molecules of coniferyl alcohol in the biosynthesis of lignans, flavonolignans, and alkaloids and thus plays a central role in plant secondary metabolism. The polypeptide is Dirigent protein 22 (DIR22) (Arabidopsis thaliana (Mouse-ear cress)).